The chain runs to 222 residues: Ras-related protein Rab11D (222 aa).

Position 22–29 (22–29 (GDSAVGKS)) interacts with GTP. The Effector region motif lies at 44–52 (SKATIGVEF). Residues 70–74 (DTAGQ) and 128–131 (NKTD) each bind GTP. Residues cysteine 219 and cysteine 220 are each lipidated (S-geranylgeranyl cysteine).

The protein belongs to the small GTPase superfamily. Rab family.

The protein localises to the cell membrane. The sequence is that of Ras-related protein Rab11D (RAB11D) from Nicotiana tabacum (Common tobacco).